The chain runs to 356 residues: S-adenosylmethionine:tRNA ribosyltransferase-isomerase (356 aa).

Belongs to the QueA family. As to quaternary structure, monomer.

The protein resides in the cytoplasm. The enzyme catalyses 7-aminomethyl-7-carbaguanosine(34) in tRNA + S-adenosyl-L-methionine = epoxyqueuosine(34) in tRNA + adenine + L-methionine + 2 H(+). It functions in the pathway tRNA modification; tRNA-queuosine biosynthesis. In terms of biological role, transfers and isomerizes the ribose moiety from AdoMet to the 7-aminomethyl group of 7-deazaguanine (preQ1-tRNA) to give epoxyqueuosine (oQ-tRNA). The polypeptide is S-adenosylmethionine:tRNA ribosyltransferase-isomerase (Enterobacter sp. (strain 638)).